A 364-amino-acid chain; its full sequence is Cyclin-D3-2 (364 aa).

Residues 331 to 364 (PPGRPIKRGAAAATTADPLPADEESRDAWPPYAA) are disordered. A compositionally biased stretch (low complexity) spans 340 to 349 (AAAATTADPL).

The protein belongs to the cyclin family. Cyclin D subfamily.

The protein is Cyclin-D3-2 (CYCD3-2) of Oryza sativa subsp. japonica (Rice).